Reading from the N-terminus, the 358-residue chain is Trans-anol O-methyltransferase 1 (358 aa).

5 residues coordinate S-adenosyl-L-methionine: Gly-201, Asp-224, Asp-244, Met-245, and Arg-259. His-262 (proton acceptor) is an active-site residue.

Belongs to the class I-like SAM-binding methyltransferase superfamily. Cation-independent O-methyltransferase family. COMT subfamily. As to expression, highly expressed in developing fruits. Expressed at low levels in roots, young leaves, buds and flowers.

It catalyses the reaction (E)-anol + S-adenosyl-L-methionine = (E)-anethole + S-adenosyl-L-homocysteine + H(+). It carries out the reaction (E)-isoeugenol + S-adenosyl-L-methionine = (E)-isomethyleugenol + S-adenosyl-L-homocysteine + H(+). It functions in the pathway aromatic compound metabolism; phenylpropanoid biosynthesis. Its activity is regulated as follows. Inhibited by zinc and copper. Its function is as follows. Phenylpropene O-methyltransferase that catalyzes the conversion of trans-anol to trans-anethole and isoeugenol to isomethyleugenol. Phenylpropenes are the primary constituents of various essential plant oils. They are produced as antimicrobial and antianimal compounds, or as floral attractants of pollinators. The protein is Trans-anol O-methyltransferase 1 (AIMT1) of Pimpinella anisum (Anise).